Here is a 447-residue protein sequence, read N- to C-terminus: UPF0328 protein ECU10_1870 (447 aa).

2 stretches are compositionally biased toward basic and acidic residues: residues 1 to 10 (MPSDHPDFRS) and 64 to 84 (HTEG…HTET). Disordered stretches follow at residues 1 to 103 (MPSD…TATP) and 147 to 173 (VKSQ…NPRI). The segment covering 92–103 (CPPPHPGPTATP) has biased composition (pro residues).

The protein belongs to the UPF0328 family.

This Encephalitozoon cuniculi (strain GB-M1) (Microsporidian parasite) protein is UPF0328 protein ECU10_1870.